A 540-amino-acid polypeptide reads, in one-letter code: Kinesin light chain (540 aa).

Residues 34 to 138 (LETSVKGVKE…NKHLKYMASI (105 aa)) are a coiled coil. TPR repeat units lie at residues 206 to 239 (LRTL…LEKT), 248 to 281 (ATML…REKC), 290 to 323 (AATL…REKV), 332 to 365 (AKQL…YESK), 374 to 407 (AKTK…AHER), and 456 to 489 (TTTL…KKQH).

Belongs to the kinesin light chain family. As to quaternary structure, oligomeric complex composed of two heavy chains and two light chains. Interacts with unc-83; the interaction is direct. Interacts with unc-33; the interaction regulates unc-33 neurite localization. Interacts with casy-1.

It localises to the cytoplasm. The protein resides in the cytoskeleton. Its subcellular location is the nucleus envelope. Kinesin is a microtubule-associated force-producing protein that may play a role in organelle transport. The light chain may function in coupling of cargo to the heavy chain or in the modulation of its ATPase activity. Recruits unc-83 (within the unc-83-unc-84 LINC complex) to the nuclear envelope during nuclear migration to mediate the link between the nuclear envelope and the microtubule cytoskeleton in hypodermal precursor cells. This is Kinesin light chain from Caenorhabditis elegans.